Reading from the N-terminus, the 561-residue chain is GPI mannosyltransferase 3 (561 aa).

8 helical membrane-spanning segments follow: residues 3–25 (LIYVFLLILAVRLASVFVVQTYY), 64–84 (IAGLYKILALLQLDSAHLLVV), 110–130 (WALFLILVPWFWFYTGSRTLA), 155–175 (LWPAAICCFLRPTAAVIWLPL), 195–215 (FVLIGLLVAGLGIAIDTYWHG), 246–266 (FSVGLPTVLGINTLPFIFGVM), 275–295 (YPVSKQLLITIFLTLVVLSAV), and 328–348 (TMLWTTALVILVGNVMPAWYL). N-linked (GlcNAc...) asparagine glycosylation is found at asparagine 398 and asparagine 456. The interval 525–546 (ENAFNRGPDSGQHEPDVHDHPP) is disordered. The segment covering 535-546 (GQHEPDVHDHPP) has biased composition (basic and acidic residues).

This sequence belongs to the glycosyltransferase 22 family. PIGB subfamily.

It is found in the endoplasmic reticulum membrane. Its pathway is glycolipid biosynthesis; glycosylphosphatidylinositol-anchor biosynthesis. Its function is as follows. Mannosyltransferase involved in glycosylphosphatidylinositol-anchor biosynthesis. Transfers the third alpha-1,2-mannose to Man2-GlcN-acyl-PI during GPI precursor assembly. The chain is GPI mannosyltransferase 3 from Drosophila melanogaster (Fruit fly).